The primary structure comprises 191 residues: Ribosomal RNA large subunit methyltransferase E (191 aa).

S-adenosyl-L-methionine-binding residues include Gly49, Trp51, Asp66, Asp82, and Asp105. The active-site Proton acceptor is the Lys145.

Belongs to the class I-like SAM-binding methyltransferase superfamily. RNA methyltransferase RlmE family.

The protein localises to the cytoplasm. It carries out the reaction uridine(2552) in 23S rRNA + S-adenosyl-L-methionine = 2'-O-methyluridine(2552) in 23S rRNA + S-adenosyl-L-homocysteine + H(+). Specifically methylates the uridine in position 2552 of 23S rRNA at the 2'-O position of the ribose in the fully assembled 50S ribosomal subunit. This Archaeoglobus fulgidus (strain ATCC 49558 / DSM 4304 / JCM 9628 / NBRC 100126 / VC-16) protein is Ribosomal RNA large subunit methyltransferase E.